The following is a 494-amino-acid chain: Acetyl-coenzyme A carboxylase carboxyl transferase subunit beta, chloroplastic (494 aa).

In terms of domain architecture, CoA carboxyltransferase N-terminal spans 226–494 (LWVQCENCYG…VPLNQNETEH (269 aa)). Zn(2+)-binding residues include Cys230, Cys233, Cys249, and Cys252. The C4-type zinc-finger motif lies at 230–252 (CENCYGLNYKKFLKSKMNICEQC).

The protein belongs to the AccD/PCCB family. In terms of assembly, acetyl-CoA carboxylase is a heterohexamer composed of biotin carboxyl carrier protein, biotin carboxylase and 2 subunits each of ACCase subunit alpha and ACCase plastid-coded subunit beta (accD). It depends on Zn(2+) as a cofactor.

Its subcellular location is the plastid. It is found in the chloroplast stroma. The catalysed reaction is N(6)-carboxybiotinyl-L-lysyl-[protein] + acetyl-CoA = N(6)-biotinyl-L-lysyl-[protein] + malonyl-CoA. The protein operates within lipid metabolism; malonyl-CoA biosynthesis; malonyl-CoA from acetyl-CoA: step 1/1. Functionally, component of the acetyl coenzyme A carboxylase (ACC) complex. Biotin carboxylase (BC) catalyzes the carboxylation of biotin on its carrier protein (BCCP) and then the CO(2) group is transferred by the transcarboxylase to acetyl-CoA to form malonyl-CoA. The protein is Acetyl-coenzyme A carboxylase carboxyl transferase subunit beta, chloroplastic of Coffea arabica (Arabian coffee).